A 309-amino-acid chain; its full sequence is Acetylglutamate kinase (309 aa).

Residues Gly82–Gly83, Arg104, and Asn206 contribute to the substrate site.

Belongs to the acetylglutamate kinase family. ArgB subfamily.

The protein localises to the cytoplasm. The enzyme catalyses N-acetyl-L-glutamate + ATP = N-acetyl-L-glutamyl 5-phosphate + ADP. The protein operates within amino-acid biosynthesis; L-arginine biosynthesis; N(2)-acetyl-L-ornithine from L-glutamate: step 2/4. In terms of biological role, catalyzes the ATP-dependent phosphorylation of N-acetyl-L-glutamate. The polypeptide is Acetylglutamate kinase (Cupriavidus metallidurans (strain ATCC 43123 / DSM 2839 / NBRC 102507 / CH34) (Ralstonia metallidurans)).